Reading from the N-terminus, the 422-residue chain is Tyrosine--tRNA ligase 1 (422 aa).

Y35 is an L-tyrosine binding site. A 'HIGH' region motif is present at residues 40–49 (PTADSLHIGH). L-tyrosine-binding residues include Y170 and Q174. Residues 232 to 236 (KFGKT) carry the 'KMSKS' region motif. Position 235 (K235) interacts with ATP. One can recognise an S4 RNA-binding domain in the interval 355-421 (LSLVDVLVQS…GKKKYFLVTY (67 aa)).

Belongs to the class-I aminoacyl-tRNA synthetase family. TyrS type 1 subfamily. Homodimer.

It is found in the cytoplasm. It carries out the reaction tRNA(Tyr) + L-tyrosine + ATP = L-tyrosyl-tRNA(Tyr) + AMP + diphosphate + H(+). Catalyzes the attachment of tyrosine to tRNA(Tyr) in a two-step reaction: tyrosine is first activated by ATP to form Tyr-AMP and then transferred to the acceptor end of tRNA(Tyr). In Bacillus subtilis (strain 168), this protein is Tyrosine--tRNA ligase 1.